Here is a 246-residue protein sequence, read N- to C-terminus: Submandibular gland secretory Glx-rich protein CA (246 aa).

The N-terminal stretch at 1–18 (MLVVLLTAALLALSSAQG) is a signal peptide. The interval 14–223 (SSAQGTDEEV…SGRPKKPLLP (210 aa)) is disordered. Low complexity-rich tracts occupy residues 39 to 50 (PVDSGSDPPSAD), 58 to 71 (EGES…EPPA), 81 to 93 (QQEP…QEPP), 104 to 116 (QQEP…QEPP), 127 to 141 (QQEP…PPAT), 150 to 159 (QQESTQAENQ), and 178 to 196 (VESP…QQTN). A run of 5 repeats spans residues 67–89 (EEPP…QAEN), 90–112 (QEPP…QAEN), 113–135 (QEPP…QAED), 136–158 (QQPP…QAEN), and 159–181 (QEPS…VESP). The 5 X 23 AA tandem repeats stretch occupies residues 67-181 (EEPPATSGSE…QPEEGNVESP (115 aa)). Basic and acidic residues predominate over residues 197-216 (PEEKPPAPKTQEEPQHDSGR).

As to expression, submandibular gland acinar cells.

Its subcellular location is the secreted. In terms of biological role, GRP proteins have a marked affinity for hydroxyapatite. They may play a role in the formation of the protective acquired pellicle at the saliva-tooth interface. The polypeptide is Submandibular gland secretory Glx-rich protein CA (Grpca) (Rattus norvegicus (Rat)).